A 412-amino-acid polypeptide reads, in one-letter code: Cytochrome P450-SOY (412 aa).

The span at 1-25 (MTESTTDPARQNLDPTSPAPATSFP) shows a compositional bias: polar residues. Positions 1-38 (MTESTTDPARQNLDPTSPAPATSFPQDRGCPYHPPAGY) are disordered. Cys361 provides a ligand contact to heme.

This sequence belongs to the cytochrome P450 family. Requires heme as cofactor.

The protein localises to the cytoplasm. The sequence is that of Cytochrome P450-SOY (cyp105D1) from Streptomyces griseus.